The following is a 291-amino-acid chain: UPF0276 protein VV3194 (291 aa).

This sequence belongs to the UPF0276 family.

The protein is UPF0276 protein VV3194 of Vibrio vulnificus (strain YJ016).